Here is a 538-residue protein sequence, read N- to C-terminus: Putative cysteine ligase BshC (538 aa).

Positions L462–L533 form a coiled coil.

This sequence belongs to the BshC family.

The protein is Putative cysteine ligase BshC of Christiangramia forsetii (strain DSM 17595 / CGMCC 1.15422 / KT0803) (Gramella forsetii).